The primary structure comprises 243 residues: Probable transcriptional regulatory protein Bpet3099 (243 aa).

The disordered stretch occupies residues 1–21; the sequence is MAGHSKWANIQHRKGRQDAKR.

This sequence belongs to the TACO1 family.

The protein resides in the cytoplasm. This chain is Probable transcriptional regulatory protein Bpet3099, found in Bordetella petrii (strain ATCC BAA-461 / DSM 12804 / CCUG 43448).